Reading from the N-terminus, the 211-residue chain is Thymidylate kinase (211 aa).

ATP is bound at residue 7–14 (GIDGCGKT).

This sequence belongs to the thymidylate kinase family.

It carries out the reaction dTMP + ATP = dTDP + ADP. Phosphorylation of dTMP to form dTDP in both de novo and salvage pathways of dTTP synthesis. In Anaplasma marginale (strain St. Maries), this protein is Thymidylate kinase.